The primary structure comprises 134 residues: UPF0756 membrane protein YeaL (134 aa).

Helical transmembrane passes span 14–34, 51–71, 86–106, and 110–130; these read ALGFISHNTTVAVSILVLIIV, LTVGIIILTIGVMAPIASGTL, LVAIAVGVFVSWLGGRGITLM, and PQLVAGLLVGTVLGVALFRGV.

The protein belongs to the UPF0756 family.

The protein localises to the cell membrane. The protein is UPF0756 membrane protein YeaL of Salmonella typhimurium (strain LT2 / SGSC1412 / ATCC 700720).